Here is a 508-residue protein sequence, read N- to C-terminus: Photosystem II CP47 reaction center protein (508 aa).

The next 6 membrane-spanning stretches (helical) occupy residues 21 to 36 (SVHI…WAGS), 101 to 115 (IVFS…IWHW), 140 to 156 (GIHL…FGAF), 203 to 218 (IAAG…FHLS), 237 to 252 (VLSS…AFVV), and 457 to 472 (SFAL…HGSR).

Belongs to the PsbB/PsbC family. PsbB subfamily. As to quaternary structure, PSII is composed of 1 copy each of membrane proteins PsbA, PsbB, PsbC, PsbD, PsbE, PsbF, PsbH, PsbI, PsbJ, PsbK, PsbL, PsbM, PsbT, PsbX, PsbY, PsbZ, Psb30/Ycf12, at least 3 peripheral proteins of the oxygen-evolving complex and a large number of cofactors. It forms dimeric complexes. Binds multiple chlorophylls. PSII binds additional chlorophylls, carotenoids and specific lipids. is required as a cofactor.

Its subcellular location is the plastid. It is found in the chloroplast thylakoid membrane. Functionally, one of the components of the core complex of photosystem II (PSII). It binds chlorophyll and helps catalyze the primary light-induced photochemical processes of PSII. PSII is a light-driven water:plastoquinone oxidoreductase, using light energy to abstract electrons from H(2)O, generating O(2) and a proton gradient subsequently used for ATP formation. The protein is Photosystem II CP47 reaction center protein of Draba nemorosa (Woodland whitlowgrass).